The sequence spans 244 residues: Biosynthetic peptidoglycan transglycosylase (244 aa).

The chain crosses the membrane as a helical span at residues 25-45; the sequence is LLLLLTAALLYQSWFLLHIVY.

Belongs to the glycosyltransferase 51 family.

The protein localises to the cell inner membrane. The catalysed reaction is [GlcNAc-(1-&gt;4)-Mur2Ac(oyl-L-Ala-gamma-D-Glu-L-Lys-D-Ala-D-Ala)](n)-di-trans,octa-cis-undecaprenyl diphosphate + beta-D-GlcNAc-(1-&gt;4)-Mur2Ac(oyl-L-Ala-gamma-D-Glu-L-Lys-D-Ala-D-Ala)-di-trans,octa-cis-undecaprenyl diphosphate = [GlcNAc-(1-&gt;4)-Mur2Ac(oyl-L-Ala-gamma-D-Glu-L-Lys-D-Ala-D-Ala)](n+1)-di-trans,octa-cis-undecaprenyl diphosphate + di-trans,octa-cis-undecaprenyl diphosphate + H(+). It functions in the pathway cell wall biogenesis; peptidoglycan biosynthesis. Peptidoglycan polymerase that catalyzes glycan chain elongation from lipid-linked precursors. In Nitrosomonas europaea (strain ATCC 19718 / CIP 103999 / KCTC 2705 / NBRC 14298), this protein is Biosynthetic peptidoglycan transglycosylase.